The following is a 97-amino-acid chain: Co-chaperonin GroES (97 aa).

The protein belongs to the GroES chaperonin family. In terms of assembly, heptamer of 7 subunits arranged in a ring. Interacts with the chaperonin GroEL.

It is found in the cytoplasm. Together with the chaperonin GroEL, plays an essential role in assisting protein folding. The GroEL-GroES system forms a nano-cage that allows encapsulation of the non-native substrate proteins and provides a physical environment optimized to promote and accelerate protein folding. GroES binds to the apical surface of the GroEL ring, thereby capping the opening of the GroEL channel. The protein is Co-chaperonin GroES of Buchnera aphidicola subsp. Pemphigus spyrothecae.